Consider the following 582-residue polypeptide: DNA mismatch repair protein MutL (582 aa).

The protein belongs to the DNA mismatch repair MutL/HexB family.

This protein is involved in the repair of mismatches in DNA. It is required for dam-dependent methyl-directed DNA mismatch repair. May act as a 'molecular matchmaker', a protein that promotes the formation of a stable complex between two or more DNA-binding proteins in an ATP-dependent manner without itself being part of a final effector complex. The protein is DNA mismatch repair protein MutL of Chlamydia abortus (strain DSM 27085 / S26/3) (Chlamydophila abortus).